Consider the following 181-residue polypeptide: Malignant T-cell-amplified sequence 2 (181 aa).

The region spanning 92-171 (LPHQQVDKGA…IGIENIHYLN (80 aa)) is the PUA domain.

Belongs to the MCTS1 family.

It localises to the cytoplasm. In Mus musculus (Mouse), this protein is Malignant T-cell-amplified sequence 2.